Reading from the N-terminus, the 321-residue chain is Annexin B10 (321 aa).

Annexin repeat units lie at residues 15-86 (FDAS…GLMM), 87-158 (PPVE…LIVT), 171-243 (GQAK…AIVE), and 247-319 (SPAA…ALLG).

Belongs to the annexin family.

This is Annexin B10 (AnxB10) from Drosophila melanogaster (Fruit fly).